A 913-amino-acid polypeptide reads, in one-letter code: Isoleucine--tRNA ligase (913 aa).

Positions 57-67 match the 'HIGH' region motif; sequence PYANGDIHLGT. Glu-549 provides a ligand contact to L-isoleucyl-5'-AMP. Positions 590 to 594 match the 'KMSKS' region motif; that stretch reads KMSKS. Residue Lys-593 participates in ATP binding. Cys-881, Cys-884, Cys-901, and Cys-904 together coordinate Zn(2+).

Belongs to the class-I aminoacyl-tRNA synthetase family. IleS type 1 subfamily. In terms of assembly, monomer. It depends on Zn(2+) as a cofactor.

Its subcellular location is the cytoplasm. It carries out the reaction tRNA(Ile) + L-isoleucine + ATP = L-isoleucyl-tRNA(Ile) + AMP + diphosphate. Its function is as follows. Catalyzes the attachment of isoleucine to tRNA(Ile). As IleRS can inadvertently accommodate and process structurally similar amino acids such as valine, to avoid such errors it has two additional distinct tRNA(Ile)-dependent editing activities. One activity is designated as 'pretransfer' editing and involves the hydrolysis of activated Val-AMP. The other activity is designated 'posttransfer' editing and involves deacylation of mischarged Val-tRNA(Ile). This Fervidobacterium nodosum (strain ATCC 35602 / DSM 5306 / Rt17-B1) protein is Isoleucine--tRNA ligase.